We begin with the raw amino-acid sequence, 93 residues long: MLTVNSYFEDKVKSIGFEQNSNAISVGVMLPGNYTFGTAAAEKMSVITGALTIKRSTDADWVTFSSGEDFSVEGNSSFEVKVEIETAYLCEYL.

Belongs to the nucleoside phosphorylase PpnP family.

The catalysed reaction is a purine D-ribonucleoside + phosphate = a purine nucleobase + alpha-D-ribose 1-phosphate. It catalyses the reaction adenosine + phosphate = alpha-D-ribose 1-phosphate + adenine. The enzyme catalyses cytidine + phosphate = cytosine + alpha-D-ribose 1-phosphate. It carries out the reaction guanosine + phosphate = alpha-D-ribose 1-phosphate + guanine. The catalysed reaction is inosine + phosphate = alpha-D-ribose 1-phosphate + hypoxanthine. It catalyses the reaction thymidine + phosphate = 2-deoxy-alpha-D-ribose 1-phosphate + thymine. The enzyme catalyses uridine + phosphate = alpha-D-ribose 1-phosphate + uracil. It carries out the reaction xanthosine + phosphate = alpha-D-ribose 1-phosphate + xanthine. Catalyzes the phosphorolysis of diverse nucleosides, yielding D-ribose 1-phosphate and the respective free bases. Can use uridine, adenosine, guanosine, cytidine, thymidine, inosine and xanthosine as substrates. Also catalyzes the reverse reactions. In Aliivibrio fischeri (strain ATCC 700601 / ES114) (Vibrio fischeri), this protein is Pyrimidine/purine nucleoside phosphorylase.